Here is a 157-residue protein sequence, read N- to C-terminus: 2-C-methyl-D-erythritol 2,4-cyclodiphosphate synthase (157 aa).

Residues Asp8 and His10 each coordinate a divalent metal cation. Residues Asp8–His10 and His34–Ser35 each bind 4-CDP-2-C-methyl-D-erythritol 2-phosphate. His42 contacts a divalent metal cation. Residues Asp56–Gly58, Phe61–Asp65, Thr132–Glu135, Phe139, and Arg142 each bind 4-CDP-2-C-methyl-D-erythritol 2-phosphate.

It belongs to the IspF family. Homotrimer. The cofactor is a divalent metal cation.

The catalysed reaction is 4-CDP-2-C-methyl-D-erythritol 2-phosphate = 2-C-methyl-D-erythritol 2,4-cyclic diphosphate + CMP. It participates in isoprenoid biosynthesis; isopentenyl diphosphate biosynthesis via DXP pathway; isopentenyl diphosphate from 1-deoxy-D-xylulose 5-phosphate: step 4/6. Involved in the biosynthesis of isopentenyl diphosphate (IPP) and dimethylallyl diphosphate (DMAPP), two major building blocks of isoprenoid compounds. Catalyzes the conversion of 4-diphosphocytidyl-2-C-methyl-D-erythritol 2-phosphate (CDP-ME2P) to 2-C-methyl-D-erythritol 2,4-cyclodiphosphate (ME-CPP) with a corresponding release of cytidine 5-monophosphate (CMP). In Salinibacter ruber (strain DSM 13855 / M31), this protein is 2-C-methyl-D-erythritol 2,4-cyclodiphosphate synthase.